A 120-amino-acid polypeptide reads, in one-letter code: Large ribosomal subunit protein bL12 (120 aa).

It belongs to the bacterial ribosomal protein bL12 family. In terms of assembly, homodimer. Part of the ribosomal stalk of the 50S ribosomal subunit. Forms a multimeric L10(L12)X complex, where L10 forms an elongated spine to which 2 to 4 L12 dimers bind in a sequential fashion. Binds GTP-bound translation factors.

Functionally, forms part of the ribosomal stalk which helps the ribosome interact with GTP-bound translation factors. Is thus essential for accurate translation. This is Large ribosomal subunit protein bL12 from Listeria innocua serovar 6a (strain ATCC BAA-680 / CLIP 11262).